Consider the following 311-residue polypeptide: Energy-coupling factor transporter ATP-binding protein EcfA2 (311 aa).

Residues 3–265 (IKLKDVKFTF…IAFLEENNLQ (263 aa)) enclose the ABC transporter domain. Position 40-47 (40-47 (GQTGSGKT)) interacts with ATP.

This sequence belongs to the ABC transporter superfamily. Energy-coupling factor EcfA family. In terms of assembly, forms a stable energy-coupling factor (ECF) transporter complex composed of 2 membrane-embedded substrate-binding proteins (S component), 2 ATP-binding proteins (A component) and 2 transmembrane proteins (T component).

It localises to the cell membrane. ATP-binding (A) component of a common energy-coupling factor (ECF) ABC-transporter complex. Unlike classic ABC transporters this ECF transporter provides the energy necessary to transport a number of different substrates. This is Energy-coupling factor transporter ATP-binding protein EcfA2 from Mycoplasmopsis synoviae (strain 53) (Mycoplasma synoviae).